The following is a 101-amino-acid chain: ATP-dependent Clp protease adapter protein ClpS 2 (101 aa).

It belongs to the ClpS family. In terms of assembly, binds to the N-terminal domain of the chaperone ClpA.

Involved in the modulation of the specificity of the ClpAP-mediated ATP-dependent protein degradation. The polypeptide is ATP-dependent Clp protease adapter protein ClpS 2 (Mesorhizobium japonicum (strain LMG 29417 / CECT 9101 / MAFF 303099) (Mesorhizobium loti (strain MAFF 303099))).